Reading from the N-terminus, the 486-residue chain is O-methyltransferase gedA (486 aa).

Residues 298–299 (GG), Asp321, 353–354 (SF), and Arg369 contribute to the S-adenosyl-L-methionine site. His373 serves as the catalytic Proton acceptor.

It belongs to the class I-like SAM-binding methyltransferase superfamily. Cation-independent O-methyltransferase family.

The enzyme catalyses emodin + S-adenosyl-L-methionine = questin + S-adenosyl-L-homocysteine + H(+). The protein operates within secondary metabolite biosynthesis. Its function is as follows. O-methyltransferase; part of the gene cluster that mediates the biosynthesis of geodin, an intermediate in the biosynthesis of other natural products. The pathway begins with the synthesis of atrochrysone thioester by the polyketide synthase (PKS) gedC. The atrochrysone carboxyl ACP thioesterase gedB then breaks the thioester bond and releases the atrochrysone carboxylic acid from gedC. The atrochrysone carboxylic acid is then converted to atrochrysone which is further transformed into emodinanthrone. The next step is performed by the emodinanthrone oxygenase gedH that catalyzes the oxidation of emodinanthrone to emodin. Emodin O-methyltransferase encoded probably by gedA then catalyzes methylation of the 8-hydroxy group of emodin to form questin. Ring cleavage of questin by questin oxidase gedK leads to desmethylsulochrin via several intermediates including questin epoxide. Another methylation step probably catalyzed by methyltransferase gedG leads to the formation of sulochrin which is further converted to dihydrogeodin by the sulochrin halogenase gedL. Finally, the dihydrogeodin oxidase gedJ catalyzes the stereospecific phenol oxidative coupling reaction converting dihydrogeodin to geodin. This chain is O-methyltransferase gedA, found in Aspergillus terreus (strain NIH 2624 / FGSC A1156).